Consider the following 347-residue polypeptide: CCN family member 2 (347 aa).

The signal sequence occupies residues 1 to 24; sequence MLASVAGPVSLALVLLLCTRPATG. The region spanning 25 to 96 is the IGFBP N-terminal domain; the sequence is QDCSAQCQCA…NRKIGVCTAK (72 aa). 6 disulfide bridges follow: cysteine 27-cysteine 52, cysteine 31-cysteine 54, cysteine 33-cysteine 55, cysteine 41-cysteine 58, cysteine 66-cysteine 80, and cysteine 72-cysteine 93. The VWFC domain occupies 99–165; sequence APCVFGGSVY…GKCCEEWVCD (67 aa). The 46-residue stretch at 196-241 folds into the TSP type-1 domain; it reads NCLVQTTEWSACSKTCGMGISTRVTNDNTFCRLEKQSRLCMVRPCE. Residues 245-347 form a heparin-binding region; it reads EENIKKGKKC…YYRKMYGDMA (103 aa). Intrachain disulfides connect cysteine 254-cysteine 291, cysteine 271-cysteine 305, cysteine 282-cysteine 321, cysteine 285-cysteine 323, and cysteine 290-cysteine 327. A CTCK domain is found at 254 to 328; the sequence is CIRTPKIAKP…KTCACHYNCP (75 aa).

The protein belongs to the CCN family. In terms of assembly, monomer. Interacts with TSKU.

The protein resides in the secreted. It is found in the extracellular space. The protein localises to the extracellular matrix. Major connective tissue mitoattractant secreted by vascular endothelial cells. Promotes proliferation and differentiation of chondrocytes. Is involved in the stimulation of osteoblast differentiation and has a critical role in osteogenesis. Mediates heparin- and divalent cation-dependent cell adhesion in many cell types including fibroblasts, myofibroblasts, endothelial and epithelial cells. Enhances fibroblast growth factor-induced DNA synthesis. This is CCN family member 2 from Rattus norvegicus (Rat).